The chain runs to 478 residues: Alpha-1,3-mannosyl-glycoprotein 4-beta-N-acetylglucosaminyltransferase C (478 aa).

At 1 to 25 the chain is on the cytoplasmic side; it reads MLKFYQMKYIFQILDKMRCLRKRST. Residues 26 to 43 form a helical; Signal-anchor for type II membrane protein membrane-spanning segment; that stretch reads VSFLGVLVVFLLFMNLYI. The Lumenal portion of the chain corresponds to 44–478; the sequence is EDSYVLEGDK…IIRSISIWTS (435 aa). Asn84 and Asn215 each carry an N-linked (GlcNAc...) asparagine glycan.

The protein belongs to the glycosyltransferase 54 family. A divalent metal cation serves as cofactor.

It localises to the golgi apparatus membrane. The catalysed reaction is N(4)-{beta-D-GlcNAc-(1-&gt;2)-alpha-D-Man-(1-&gt;3)-[beta-D-GlcNAc-(1-&gt;2)-alpha-D-Man-(1-&gt;6)]-beta-D-Man-(1-&gt;4)-beta-D-GlcNAc-(1-&gt;4)-beta-D-GlcNAc}-L-asparaginyl-[protein] + UDP-N-acetyl-alpha-D-glucosamine = N(4)-{beta-D-GlcNAc-(1-&gt;2)-[beta-D-GlcNAc-(1-&gt;4)]-alpha-D-Man-(1-&gt;3)-[beta-D-GlcNAc-(1-&gt;2)-alpha-D-Man-(1-&gt;6)]-beta-D-Man-(1-&gt;4)-beta-D-GlcNAc-(1-&gt;4)-beta-D-GlcNAc}-L-asparaginyl-[protein] + UDP + H(+). Its pathway is protein modification; protein glycosylation. In terms of biological role, glycosyltransferase that participates in the transfer of N-acetylglucosamine (GlcNAc) to the core mannose residues of N-linked glycans. Catalyzes the formation of the GlcNAcbeta1-4 branch on the GlcNAcbeta1-2Manalpha1-3 arm of the core structure of N-linked glycans. Essential for the production of tri- and tetra-antennary N-linked sugar chains. Does not catalyze the transfer of GlcNAc to the Manalpha1-6 arm to form GlcNAcBeta1-4Manalpha1-6 linkage ('GnT-VI' activity). This Mus musculus (Mouse) protein is Alpha-1,3-mannosyl-glycoprotein 4-beta-N-acetylglucosaminyltransferase C (Mgat4c).